The sequence spans 276 residues: F420-dependent methylenetetrahydromethanopterin dehydrogenase (276 aa).

The protein belongs to the MTD family.

The enzyme catalyses 5,10-methylenetetrahydromethanopterin + oxidized coenzyme F420-(gamma-L-Glu)(n) + 2 H(+) = 5,10-methenyl-5,6,7,8-tetrahydromethanopterin + reduced coenzyme F420-(gamma-L-Glu)(n). It participates in one-carbon metabolism; methanogenesis from CO(2); 5,10-methylene-5,6,7,8-tetrahydromethanopterin from 5,10-methenyl-5,6,7,8-tetrahydromethanopterin (coenzyme F420 route): step 1/1. Functionally, catalyzes the reversible reduction of methenyl-H(4)MPT(+) to methylene-H(4)MPT. The chain is F420-dependent methylenetetrahydromethanopterin dehydrogenase from Methanococcus vannielii (strain ATCC 35089 / DSM 1224 / JCM 13029 / OCM 148 / SB).